We begin with the raw amino-acid sequence, 512 residues long: 2-isopropylmalate synthase (512 aa).

In terms of domain architecture, Pyruvate carboxyltransferase spans 5-267; sequence VVIFDTTLRD…ETSINKSEIY (263 aa). The Mn(2+) site is built by Asp-14, His-202, His-204, and Asn-238. Residues 391 to 512 form a regulatory domain region; it reads SLEYLHITSG…LPKAKTERAV (122 aa).

It belongs to the alpha-IPM synthase/homocitrate synthase family. LeuA type 1 subfamily. In terms of assembly, homodimer. The cofactor is Mn(2+).

It localises to the cytoplasm. The enzyme catalyses 3-methyl-2-oxobutanoate + acetyl-CoA + H2O = (2S)-2-isopropylmalate + CoA + H(+). The protein operates within amino-acid biosynthesis; L-leucine biosynthesis; L-leucine from 3-methyl-2-oxobutanoate: step 1/4. Catalyzes the condensation of the acetyl group of acetyl-CoA with 3-methyl-2-oxobutanoate (2-ketoisovalerate) to form 3-carboxy-3-hydroxy-4-methylpentanoate (2-isopropylmalate). The polypeptide is 2-isopropylmalate synthase (Heliobacterium modesticaldum (strain ATCC 51547 / Ice1)).